The chain runs to 274 residues: uncharacterized protein (274 aa).

It belongs to the class IV-like SAM-binding methyltransferase superfamily. RNA methyltransferase TrmH family.

This is an uncharacterized protein from Synechocystis sp. (strain ATCC 27184 / PCC 6803 / Kazusa).